The following is a 306-amino-acid chain: Putative S-adenosyl-L-methionine-dependent methyltransferase Mvan_1345 (306 aa).

Residues Asp-134 and 163–164 contribute to the S-adenosyl-L-methionine site; that span reads DL.

Belongs to the UPF0677 family.

Exhibits S-adenosyl-L-methionine-dependent methyltransferase activity. This is Putative S-adenosyl-L-methionine-dependent methyltransferase Mvan_1345 from Mycolicibacterium vanbaalenii (strain DSM 7251 / JCM 13017 / BCRC 16820 / KCTC 9966 / NRRL B-24157 / PYR-1) (Mycobacterium vanbaalenii).